A 518-amino-acid chain; its full sequence is Bifunctional enzyme NanE/NanK (518 aa).

A manNAc-6-P epimerase region spans residues 1 to 234 (MCRVQGMIEE…DAVESAAKPS (234 aa)). The segment at 235-518 (SPVLAFDIGG…VADLAATYFS (284 aa)) is manNAc kinase. ATP contacts are provided by residues 239 to 246 (AFDIGGTK) and 365 to 372 (GIGGGIVL).

This sequence in the N-terminal section; belongs to the NanE family. The protein in the C-terminal section; belongs to the ROK (NagC/XylR) family. NanK subfamily.

The catalysed reaction is an N-acyl-D-glucosamine 6-phosphate = an N-acyl-D-mannosamine 6-phosphate. The enzyme catalyses an N-acyl-D-mannosamine + ATP = an N-acyl-D-mannosamine 6-phosphate + ADP + H(+). Its pathway is amino-sugar metabolism; N-acetylneuraminate degradation; D-fructose 6-phosphate from N-acetylneuraminate: step 2/5. It functions in the pathway amino-sugar metabolism; N-acetylneuraminate degradation; D-fructose 6-phosphate from N-acetylneuraminate: step 3/5. Functionally, converts N-acetylmannosamine-6-phosphate (ManNAc-6-P) to N-acetylglucosamine-6-phosphate (GlcNAc-6-P). Catalyzes the phosphorylation of N-acetylmannosamine (ManNAc) to ManNAc-6-P. The chain is Bifunctional enzyme NanE/NanK (nanEK) from Brucella melitensis biotype 1 (strain ATCC 23456 / CCUG 17765 / NCTC 10094 / 16M).